The primary structure comprises 55 residues: Large ribosomal subunit protein bL33B (55 aa).

This sequence belongs to the bacterial ribosomal protein bL33 family.

The protein is Large ribosomal subunit protein bL33B (rpmG2) of Mycobacterium tuberculosis (strain CDC 1551 / Oshkosh).